A 273-amino-acid chain; its full sequence is Large ribosomal subunit protein uL2cy (273 aa).

Disordered stretches follow at residues 1 to 22 (MAIHLYKTSTPSTRNGAVDSQV) and 224 to 273 (NPVD…RRRK).

Belongs to the universal ribosomal protein uL2 family. In terms of assembly, part of the 50S ribosomal subunit.

It localises to the plastid. Its subcellular location is the chloroplast. The sequence is that of Large ribosomal subunit protein uL2cy (rpl2-B) from Chloranthus spicatus (Chulantree).